A 128-amino-acid polypeptide reads, in one-letter code: Iron-sulfur cluster insertion protein ErpA (128 aa).

Residues cysteine 56, cysteine 120, and cysteine 122 each coordinate iron-sulfur cluster.

This sequence belongs to the HesB/IscA family. In terms of assembly, homodimer. Iron-sulfur cluster serves as cofactor.

In terms of biological role, required for insertion of 4Fe-4S clusters for at least IspG. The protein is Iron-sulfur cluster insertion protein ErpA of Xanthomonas axonopodis pv. citri (strain 306).